A 106-amino-acid chain; its full sequence is MICOS complex subunit MIC12 (106 aa).

Residues 11–27 (VKWTLSVGVIGSVFYLY) form a helical membrane-spanning segment.

The protein belongs to the MICOS complex subunit Mic12 family. Component of the mitochondrial contact site and cristae organizing system (MICOS) complex.

The protein resides in the mitochondrion inner membrane. In terms of biological role, component of the MICOS complex, a large protein complex of the mitochondrial inner membrane that plays crucial roles in the maintenance of crista junctions, inner membrane architecture, and formation of contact sites to the outer membrane. This Saccharomyces cerevisiae (strain RM11-1a) (Baker's yeast) protein is MICOS complex subunit MIC12 (AIM5).